The following is a 201-amino-acid chain: Peptidyl-tRNA hydrolase (201 aa).

Y14 is a binding site for tRNA. H19 (proton acceptor) is an active-site residue. TRNA-binding residues include F64, N66, and N112.

This sequence belongs to the PTH family. As to quaternary structure, monomer.

The protein resides in the cytoplasm. It catalyses the reaction an N-acyl-L-alpha-aminoacyl-tRNA + H2O = an N-acyl-L-amino acid + a tRNA + H(+). Its function is as follows. Hydrolyzes ribosome-free peptidyl-tRNAs (with 1 or more amino acids incorporated), which drop off the ribosome during protein synthesis, or as a result of ribosome stalling. Catalyzes the release of premature peptidyl moieties from peptidyl-tRNA molecules trapped in stalled 50S ribosomal subunits, and thus maintains levels of free tRNAs and 50S ribosomes. In Rhodopseudomonas palustris (strain BisA53), this protein is Peptidyl-tRNA hydrolase.